The chain runs to 868 residues: Receptor-like protein 32 (868 aa).

Residues 1 to 32 (MKDSWNSTSIIPFTFSSLIFFLFTFDFQDVFG) form the signal peptide. Residues 33 to 815 (VPTKHLCRLE…PPELEEEDRE (783 aa)) lie on the Extracellular side of the membrane. N-linked (GlcNAc...) asparagine glycans are attached at residues asparagine 73, asparagine 109, asparagine 141, and asparagine 165. LRR repeat units lie at residues 118–142 (LRFL…IENF), 143–166 (SHLT…IGNL), 168–188 (QLTF…FFGN), 189–213 (MNQL…LLNL), 214–237 (KHLS…MSSL), 239–261 (NLEY…LFTI), 262–285 (ASLT…NISS), 287–310 (STLT…ISKF), 312–334 (NLQD…IFTN), 335–360 (LKSL…LFSS), 362–385 (LNSI…SVAD), 389–412 (TQLI…LRSQ), 413–436 (HKMT…LWTL), 438–459 (KLIF…TEHG), 465–489 (KPSM…ICAL), 490–515 (RSLI…NLKS), 517–538 (LSFL…IFKS), 540–560 (RSLD…FIRL), 561–586 (SALE…SLKK), 588–606 (QVLV…HASF), 607–630 (HTLR…YFVN), 675–699 (LKIY…IGLL), 700–723 (KELH…MGNL), 724–747 (RELE…LGNL), and 749–772 (YLAY…QFRR). N-linked (GlcNAc...) asparagine glycosylation is present at asparagine 233. Residues asparagine 275 and asparagine 282 are each glycosylated (N-linked (GlcNAc...) asparagine). 2 N-linked (GlcNAc...) asparagine glycosylation sites follow: asparagine 342 and asparagine 347. Residues asparagine 477 and asparagine 503 are each glycosylated (N-linked (GlcNAc...) asparagine). An N-linked (GlcNAc...) asparagine glycan is attached at asparagine 574. N-linked (GlcNAc...) asparagine glycosylation is present at asparagine 613. N-linked (GlcNAc...) asparagine glycosylation is found at asparagine 706, asparagine 746, asparagine 754, and asparagine 774. Residues 816–836 (VFSWIAAAIGFGPGIAFGLTI) traverse the membrane as a helical segment. The Cytoplasmic portion of the chain corresponds to 837 to 868 (RYILVFYKPDWFMHTFGHLQPSAHEKRLRRKQ).

It belongs to the RLP family.

The protein resides in the cell membrane. In Arabidopsis thaliana (Mouse-ear cress), this protein is Receptor-like protein 32.